A 967-amino-acid chain; its full sequence is A disintegrin and metalloproteinase with thrombospondin motifs 1 (967 aa).

Disordered regions lie at residues 1-27 (MQRA…APGS) and 192-250 (GDVG…SIRK). Positions 1–49 (MQRAVPEGFGRRKLGSDMGNAERAPGSRSFGPVPTLLLLAAALLAVSDA) are cleaved as a signal peptide. Residues 50-252 (LGRPSEEDEE…TGTGSIRKKR (203 aa)) constitute a propeptide that is removed on maturation. The short motif at 196 to 203 (GTCGVVDD) is the Cysteine switch element. Cys198 provides a ligand contact to Zn(2+). Over residues 203–212 (DEPRPTGKAE) the composition is skewed to basic and acidic residues. Residues 213–226 (TEDEDEGTEGEDEG) show a composition bias toward acidic residues. One can recognise a Peptidase M12B domain in the interval 258-467 (RYVETMLVAD…GHGECLMDKP (210 aa)). The Ca(2+) site is built by Glu261, Asp344, and Asp351. Intrachain disulfides connect Cys333/Cys385, Cys362/Cys367, Cys379/Cys462, and Cys417/Cys446. Position 401 (His401) interacts with Zn(2+). Residue Glu402 is part of the active site. Zn(2+) contacts are provided by His405 and His411. The Ca(2+) site is built by Cys462 and Asp465. Residues 476–559 (DLPGTSYDAN…DRKHFDTPFH (84 aa)) enclose the Disintegrin domain. 4 disulfide bridges follow: Cys488/Cys511, Cys499/Cys521, Cys506/Cys540, and Cys534/Cys545. The N-linked (GlcNAc...) asparagine glycan is linked to Asn547. In terms of domain architecture, TSP type-1 1 spans 559–614 (HGSWGMWGPWGDCSRTCGGGVQYTMRECDNPVPKNGGKYCEGKRVRYRSCNLEDCP). 3 disulfide bridges follow: Cys571–Cys608, Cys575–Cys613, and Cys586–Cys598. Asn720 and Asn764 each carry an N-linked (GlcNAc...) asparagine glycan. Positions 725 to 849 (KKISGSVTSA…YFVKKKKESF (125 aa)) are spacer. 2 TSP type-1 domains span residues 854–905 (TFSA…RPCA) and 908–967 (PCPQ…AECS).

Zn(2+) is required as a cofactor. The precursor is cleaved by a furin endopeptidase. In terms of processing, glycosylated. Can be O-fucosylated by POFUT2 on a serine or a threonine residue found within the consensus sequence C1-X(2)-(S/T)-C2-G of the TSP type-1 repeat domains where C1 and C2 are the first and second cysteine residue of the repeat, respectively. Fucosylated repeats can then be further glycosylated by the addition of a beta-1,3-glucose residue by the glucosyltransferase, B3GALTL. Fucosylation mediates the efficient secretion of ADAMTS family members. Can also be C-glycosylated with one or two mannose molecules on tryptophan residues within the consensus sequence W-X-X-W of the TPRs, and N-glycosylated. These other glycosylations can also facilitate secretion.

It is found in the secreted. The protein resides in the extracellular space. The protein localises to the extracellular matrix. Functionally, metalloprotease which cleaves aggrecan, a cartilage proteoglycan, at the '1938-Glu-|-Leu-1939' site (within the chondroitin sulfate attachment domain), and may be involved in its turnover. Also cleaves COMP. Has angiogenic inhibitor activity. May play a critical role in follicular rupture. The chain is A disintegrin and metalloproteinase with thrombospondin motifs 1 (ADAMTS1) from Homo sapiens (Human).